Consider the following 72-residue polypeptide: V-type proton ATPase subunit e (72 aa).

At 1–2 (MS) the chain is on the lumenal side. The helical transmembrane segment at 3–23 (FYTVVATFLSVVLASAVFWVL) threads the bilayer. Residues 24–34 (APKENQTVWRS) lie on the Cytoplasmic side of the membrane. A helical membrane pass occupies residues 35–55 (TIILSMSMMFLMWAVTYLSQL). The Lumenal segment spans residues 56–72 (HPLVVPRRSDLRPEFAE).

The protein belongs to the V-ATPase e1/e2 subunit family. As to quaternary structure, V-ATPase is a heteromultimeric enzyme composed of a peripheral catalytic V1 complex (components A to H) attached to an integral membrane V0 proton pore complex (components: a, c, c', c'', d, e, f and VOA1).

The protein resides in the vacuole membrane. Subunit of the V0 complex of vacuolar(H+)-ATPase (V-ATPase), a multisubunit enzyme composed of a peripheral complex (V1) that hydrolyzes ATP and a membrane integral complex (V0) that translocates protons. V-ATPase is responsible for acidifying and maintaining the pH of intracellular compartments. This chain is V-type proton ATPase subunit e (VMA9), found in Eremothecium gossypii (strain ATCC 10895 / CBS 109.51 / FGSC 9923 / NRRL Y-1056) (Yeast).